The following is a 205-amino-acid chain: Recombination protein RecR (205 aa).

The C4-type zinc finger occupies 60 to 75; sequence CKVCHNISDTETCQIC. The region spanning 83–178 is the Toprim domain; that stretch reads STVCVVENIR…KLSVIARGIS (96 aa).

The protein belongs to the RecR family.

In terms of biological role, may play a role in DNA repair. It seems to be involved in an RecBC-independent recombinational process of DNA repair. It may act with RecF and RecO. In Bacteroides thetaiotaomicron (strain ATCC 29148 / DSM 2079 / JCM 5827 / CCUG 10774 / NCTC 10582 / VPI-5482 / E50), this protein is Recombination protein RecR.